The sequence spans 174 residues: uncharacterized protein (174 aa).

The disordered stretch occupies residues 78 to 97 (TFGRNIKTPDISNPTRARNE).

This sequence to yeast YMR295c.

This is an uncharacterized protein from Saccharomyces cerevisiae (strain ATCC 204508 / S288c) (Baker's yeast).